Here is a 124-residue protein sequence, read N- to C-terminus: Late histone H2B.2.2 (124 aa).

The tract at residues 1–32 (MPAKQTSGKGAKKAGKAKGRPSGASKTRRRKR) is disordered. Residues 10-19 (GAKKAGKAKG) show a composition bias toward basic residues. The O-linked (GlcNAc) serine glycan is linked to S111. Residue K119 forms a Glycyl lysine isopeptide (Lys-Gly) (interchain with G-Cter in ubiquitin) linkage.

Belongs to the histone H2B family. As to quaternary structure, the nucleosome is a histone octamer containing two molecules each of H2A, H2B, H3 and H4 assembled in one H3-H4 heterotetramer and two H2A-H2B heterodimers. The octamer wraps approximately 147 bp of DNA. Monoubiquitination of Lys-119 gives a specific tag for epigenetic transcriptional activation and is also prerequisite for histone H3 'Lys-4' and 'Lys-79' methylation. In terms of processing, glcNAcylation at Ser-111 promotes monoubiquitination of Lys-119. It fluctuates in response to extracellular glucose, and associates with transcribed genes.

The protein resides in the nucleus. The protein localises to the chromosome. In terms of biological role, core component of nucleosome. Nucleosomes wrap and compact DNA into chromatin, limiting DNA accessibility to the cellular machineries which require DNA as a template. Histones thereby play a central role in transcription regulation, DNA repair, DNA replication and chromosomal stability. DNA accessibility is regulated via a complex set of post-translational modifications of histones, also called histone code, and nucleosome remodeling. The polypeptide is Late histone H2B.2.2 (Psammechinus miliaris (Green sea urchin)).